A 333-amino-acid polypeptide reads, in one-letter code: MIETPYLLFLGDAPDMLAAKVAIGIRDWRPDHAVGQISLPGCGANLGLTEMTLEEAKAAGAKTLVIGVANRGGKISQEWKKVLVQALEEGFDLASGLHNLLRDEPDLAAVAEATGRTLHDVRVPSVQYPIADGVKRRGKRCLAVGTDCSVGKMYTALAMDAEMQARGIKSTFRATGQTGILITGDGVPLDAVIADFMAGSIEYLTPDNDDDHWDLIEGQGSLFHVSYSGVTMALVHGGQPDALILCHEPTRTHMRGLPDYDVPSLEELRDVALPLAQRANKDCKIVGISVNTQHLGEEEAVAYLKEVEGRMGLPAVDPYRHGAGRLVDALAAV.

Belongs to the N-acetyltransferase DgcN family.

The enzyme catalyses D-glutamate + acetyl-CoA = N-acetyl-D-glutamate + CoA + H(+). It participates in amino-acid degradation. N-acetyltransferase involved in a deamination-independent D-glutamate degradation pathway, named the DgcN-DgcA pathway. Catalyzes the transfer of the acetyl moiety from acetyl-CoA to D-glutamate to generate N-acetyl-D-glutamate. In Tritonibacter scottomollicae (Epibacterium scottomollicae), this protein is D-glutamate N-acetyltransferase.